The following is a 294-amino-acid chain: MTALSEQARAKVNLTLRVVGRRVDGYHDLESVVAFADCADRLTLHPGAELSLVMSGPGAQDCGDTSDNLVLKATRLLAERVPNLRTGGFVLDKHLPVAAGIGGGSADAAAALRLLARANELSADDPRVVEAARLTGADVPVCLPSKPCVMTGVGENLSPLQLPRLPAVMVNPRVPVATKDVFAALGLRAGQLNVGVVDLLKSTGWPTDGSSAADWIAAVKRGTNDLEAPALKVESVVGDVLRALAALPGVRLSRMSGSGATCFALFANDDDAQAGAQLLKAAQPGWWVHAGALS.

Residue K11 is part of the active site. 96-106 provides a ligand contact to ATP; sequence PVAAGIGGGSA. D138 is an active-site residue.

The protein belongs to the GHMP kinase family. IspE subfamily.

It catalyses the reaction 4-CDP-2-C-methyl-D-erythritol + ATP = 4-CDP-2-C-methyl-D-erythritol 2-phosphate + ADP + H(+). The protein operates within isoprenoid biosynthesis; isopentenyl diphosphate biosynthesis via DXP pathway; isopentenyl diphosphate from 1-deoxy-D-xylulose 5-phosphate: step 3/6. Catalyzes the phosphorylation of the position 2 hydroxy group of 4-diphosphocytidyl-2C-methyl-D-erythritol. The chain is 4-diphosphocytidyl-2-C-methyl-D-erythritol kinase from Rhodopseudomonas palustris (strain BisB5).